Reading from the N-terminus, the 200-residue chain is Endoribonuclease YbeY (200 aa).

Zn(2+) contacts are provided by His-120, His-124, and His-130.

It belongs to the endoribonuclease YbeY family. Zn(2+) is required as a cofactor.

The protein localises to the cytoplasm. In terms of biological role, single strand-specific metallo-endoribonuclease involved in late-stage 70S ribosome quality control and in maturation of the 3' terminus of the 16S rRNA. This Corynebacterium efficiens (strain DSM 44549 / YS-314 / AJ 12310 / JCM 11189 / NBRC 100395) protein is Endoribonuclease YbeY.